Consider the following 424-residue polypeptide: Histidine--tRNA ligase (424 aa).

The protein belongs to the class-II aminoacyl-tRNA synthetase family. As to quaternary structure, homodimer.

It is found in the cytoplasm. It catalyses the reaction tRNA(His) + L-histidine + ATP = L-histidyl-tRNA(His) + AMP + diphosphate + H(+). This is Histidine--tRNA ligase from Staphylococcus epidermidis (strain ATCC 12228 / FDA PCI 1200).